We begin with the raw amino-acid sequence, 207 residues long: Ras-related protein RABH1e (207 aa).

Position 16 to 23 (16 to 23) interacts with GTP; sequence GDQSVGKT. The Effector region motif lies at 38–46; sequence YQATIGIDF. GTP is bound by residues 64–68, 122–125, and 152–153; these read DTAGQ, NKTD, and SA. 2 S-geranylgeranyl cysteine lipidation sites follow: Cys205 and Cys207. Position 207 is a cysteine methyl ester (Cys207).

Belongs to the small GTPase superfamily. Rab family.

Its subcellular location is the golgi apparatus membrane. Its function is as follows. Protein transport. Regulator of membrane traffic from the Golgi apparatus towards the endoplasmic reticulum (ER). The sequence is that of Ras-related protein RABH1e (RABH1E) from Arabidopsis thaliana (Mouse-ear cress).